Consider the following 451-residue polypeptide: CCAAT/enhancer-binding protein (451 aa).

3 disordered regions span residues 210 to 236, 267 to 298, and 328 to 389; these read TYNN…EPID, QSNN…NSTN, and LKHH…AKVR. Low complexity-rich tracts occupy residues 218–228, 268–298, and 334–350; these read ENSSVGSDSSS, SNNL…NSTN, and LQQT…QHAQ. The span at 359-370 shows a compositional bias: basic and acidic residues; it reads KHVDKGTEEYRR. A bZIP domain is found at 365 to 428; sequence TEEYRRRRER…SLHKQIYMQL (64 aa). The basic motif stretch occupies residues 369-398; the sequence is RRRRERNNIAVRKSREKAKVRSKEVEERVK. Residues 400–407 form a leucine-zipper region; it reads LLKEKDAL.

Belongs to the bZIP family. C/EBP subfamily. In terms of assembly, binds DNA as a dimer and can form stable heterodimers.

It is found in the nucleus. May be required for the expression of gene products mediating border cell migration. Among the DNA sequences that this protein binds with high affinity is a conserved site within the promoter of its gene. In Drosophila virilis (Fruit fly), this protein is CCAAT/enhancer-binding protein (slbo).